A 1045-amino-acid chain; its full sequence is Protein madd-4 (1045 aa).

The first 23 residues, 1 to 23 (MKCSYTVVFLLFYLLIASFHVDA), serve as a signal peptide directing secretion. TSP type-1 domains lie at 24-71 (LSWA…KTCE), 236-292 (RCRW…NCVS), 294-510 (SCGR…HPCP), 512-572 (FWLT…NVVA), and 576-635 (TWVT…GSCS). 3 disulfides stabilise this stretch: cysteine 35/cysteine 65, cysteine 39/cysteine 70, and cysteine 50/cysteine 55. Residues asparagine 268 and asparagine 280 are each glycosylated (N-linked (GlcNAc...) asparagine). The region spanning 637–732 (PELLSNRVFE…FTDRLQGNVT (96 aa)) is the Ig-like C2-type domain. Cysteine 674 and cysteine 722 are joined by a disulfide. N-linked (GlcNAc...) asparagine glycans are attached at residues asparagine 730 and asparagine 781. Positions 811-873 (RWDIGHWSEC…TRPCHREDCP (63 aa)) constitute a TSP type-1 6 domain. Residues asparagine 899 and asparagine 906 are each glycosylated (N-linked (GlcNAc...) asparagine). One can recognise a TSP type-1 7 domain in the interval 932 to 990 (CKAEWRTSDWGSCSSECGTGGVQLRLLSCVWISSGRPAGRNCEQMRRPHSARACVADEP). A PLAC domain is found at 1004 to 1041 (RDASCQDQSRFCDIIKLFHSCDSLEVRQKCCSTCTFVE).

In terms of assembly, interacts with eva-1 (via the SUEL-type lectin domain). Interacts with unc-5. Interacts with unc-40; the interaction is required for the localization of unc-40 to postsynaptic domains. Isoform a forms homodimers and heterodimers with isoform b. Isoform b forms homodimers and heterodimers with isoform a. Isoform b interacts with nlg-1 (via extracellular domain); the interaction is required for nlg-1 localization to postsynaptic domains. Isoform b interacts (via the Ig-like C2-type domain) with nrx-1 (via C-terminus). Isoform a: Expressed in the commissural GABAergic and cholinergic motor neurons in the first larval stage but only in the cholinergic motor neurons in later larval stages and in adult animals. At the L1 larval stage, mainly localized at the nerve ring and at the dorsal cord. Isoform b: Expressed in the commissural GABAergic and cholinergic motor neurons whose cell bodies reside in the ventral nerve cord and which extend axons into the ventral and dorsal nerve cord. Also expressed in the head neurons RIA, RIC, lateral IL1s, lateral IL2s, OLLs, RMEs and SABs, all of which extend axons into the nerve ring. Expressed in the embryogenic blast cells and the corresponding terminally differentiated ventral cord motor neurons and head neurons.

Its subcellular location is the cell projection. The protein localises to the axon. The protein resides in the secreted. It localises to the synapse. It is found in the extracellular space. Its subcellular location is the extracellular matrix. Component of an extracellular matrix cue that is involved in the guidance of dorsoventral midline migrations and in the specification of postsynaptic domains at neuromuscular junctions (NMJs). Acts as a ligand for the netrin receptor unc-40 and the neuroligin receptor nlg-1. Secreted by the dorsal and ventral nerve cords to attract sensory axons and muscle membrane extensions called muscle arms. In parallel with unc-6 and slt-1, involved in the netrin receptor unc-40 dependent guidance of the AVM and PVM mechanosensory axons along the dorsal-ventral axis. The unc-40 coreceptor eva-1 is enhancing the responsiveness of unc-40 to the madd-4 guidance cue to attract the muscle arm extensions and AVM mechanosensory axons towards the dorsoventral midline. Acts as a synaptic organizer and is required for the specification of inhibitory GABAergic and excitatory cholinergic identities of postsynaptic domains at neuromuscular junctions (NMJs). Required for the recruitment of unc-40 to both cholinergic and GABAergic NMJs. Promotes the clustering of ACh receptors and GABA(A) receptors at postsynaptic sites during synaptogenesis. The binding to the presynaptic adhesion protein nrx-1 and to the neuroligin nlg-1 at postsynaptic sites promotes clustering of GABAergic receptors at postsynaptic NMJs, thereby contributing to normal GABAergic synaptic transmission. Its function is as follows. Isoform a and isoform c: Promotes the clustering of acetylcholine receptors (AChR) at excitatory cholinergic synapses of NMJs via the netrin receptor unc-40. In terms of biological role, acts as a guidance cue in the attraction of muscle membrane extensions (muscle arms) to the dorsal cord and in cooperation with unc-6 to the ventral cord via the netrin receptor unc-40 and via the unc-40 coreceptor eva-1. Together with nrx-1, clusters netrin receptor unc-40 and neuroligin nlg-1 at postsynaptic sites of GABAergic NMJs, thereby promoting the recruitment of GABA(A) receptors at GABAergic synapses. Prevents the recruitment of GABAergic receptors to cholinergic synapses. The sequence is that of Protein madd-4 from Caenorhabditis elegans.